Consider the following 282-residue polypeptide: MAVDPFDSALDLLRRLNPKQTTDHLNAIISIAPDLTEDLLSSVDQPLTVRRCKQTGRDYLLCDYNRDGDSYRSPWSNQFDPPLDEAGSGGVGAGGNEGAGEGAIPSERVRKMEVKANEAFDVYRDLYYEGGVSSVYFWNLDDGFAGVVLLKKSSPQGGNSEGVWDSIHVFEAIERGRSTHYKLTSTVILTLSTSGGNLGEMDLSGNMTRQVEQDLPVENDDSHIANVGRLVEDMELKMRNLLQEVYFGKAKDVVGDLRSIGSLSEGARDREAQRELIGSMRK.

Residues 73 to 103 are disordered; that stretch reads SPWSNQFDPPLDEAGSGGVGAGGNEGAGEGA. A compositionally biased stretch (gly residues) spans 87–101; it reads GSGGVGAGGNEGAGE.

Belongs to the F-actin-capping protein beta subunit family. Component of the F-actin capping complex, composed of a heterodimer of an alpha and a beta subunit.

Its subcellular location is the cytoplasm. The protein localises to the cytoskeleton. It is found in the actin patch. In terms of biological role, F-actin-capping proteins bind in a Ca(2+)-independent manner to the fast growing ends of actin filaments (barbed end) thereby blocking the exchange of subunits at these ends. Unlike other capping proteins (such as gelsolin and severin), these proteins do not sever actin filaments. The chain is F-actin-capping protein subunit beta (CAP2) from Gibberella zeae (strain ATCC MYA-4620 / CBS 123657 / FGSC 9075 / NRRL 31084 / PH-1) (Wheat head blight fungus).